Reading from the N-terminus, the 146-residue chain is Ribosomal RNA large subunit methyltransferase H (146 aa).

S-adenosyl-L-methionine-binding positions include L68, G95, and 114–119 (LSSLTF).

This sequence belongs to the RNA methyltransferase RlmH family. In terms of assembly, homodimer.

The protein localises to the cytoplasm. It carries out the reaction pseudouridine(1915) in 23S rRNA + S-adenosyl-L-methionine = N(3)-methylpseudouridine(1915) in 23S rRNA + S-adenosyl-L-homocysteine + H(+). Its function is as follows. Specifically methylates the pseudouridine at position 1915 (m3Psi1915) in 23S rRNA. The polypeptide is Ribosomal RNA large subunit methyltransferase H (Thermodesulfovibrio yellowstonii (strain ATCC 51303 / DSM 11347 / YP87)).